The primary structure comprises 212 residues: Proteasome subunit beta type-2 (212 aa).

The protein belongs to the peptidase T1B family. In terms of assembly, the 26S proteasome consists of a 20S proteasome core and two 19S regulatory subunits. The 20S proteasome core is composed of 28 subunits that are arranged in four stacked rings, resulting in a barrel-shaped structure. The two end rings are each formed by seven alpha subunits, and the two central rings are each formed by seven beta subunits. The catalytic chamber with the active sites is on the inside of the barrel.

Its subcellular location is the cytoplasm. The protein localises to the nucleus. Its function is as follows. Non-catalytic component of the proteasome, a multicatalytic proteinase complex which is characterized by its ability to cleave peptides with Arg, Phe, Tyr, Leu, and Glu adjacent to the leaving group at neutral or slightly basic pH. The proteasome has an ATP-dependent proteolytic activity. The chain is Proteasome subunit beta type-2 (PBD1) from Oryza sativa subsp. japonica (Rice).